The following is a 595-amino-acid chain: Thiol:disulfide interchange protein DsbD (595 aa).

The first 24 residues, 1–24, serve as a signal peptide directing secretion; that stretch reads MAQRFITLILLLCSVLLAPHSAQS. Cysteines 134 and 140 form a disulfide. Residues 166-186 form a disordered region; the sequence is NSSATVNPPATTQPEGDATPV. A run of 9 helical transmembrane segments spans residues 197–217, 233–253, 270–290, 311–331, 332–352, 353–373, 384–404, 411–431, and 435–455; these read ALLI…YPLI, ILIL…LLGL, YVLI…FGLY, GGSL…CSPC, TTAP…MLAG, GGTL…VTLF, WMQY…VFLL, VWGL…AFVL, and AHAG…LIVA. Cysteine 209 and cysteine 331 are oxidised to a cystine. One can recognise a Thioredoxin domain in the interval 452–592; that stretch reads LIVARPLQDW…FLQHLQNTPA (141 aa). Cysteine 507 and cysteine 510 are joined by a disulfide.

It belongs to the thioredoxin family. DsbD subfamily.

The protein localises to the cell inner membrane. The catalysed reaction is [protein]-dithiol + NAD(+) = [protein]-disulfide + NADH + H(+). It carries out the reaction [protein]-dithiol + NADP(+) = [protein]-disulfide + NADPH + H(+). Required to facilitate the formation of correct disulfide bonds in some periplasmic proteins and for the assembly of the periplasmic c-type cytochromes. Acts by transferring electrons from cytoplasmic thioredoxin to the periplasm. This transfer involves a cascade of disulfide bond formation and reduction steps. The polypeptide is Thiol:disulfide interchange protein DsbD (Yersinia pestis bv. Antiqua (strain Nepal516)).